The following is a 239-amino-acid chain: Prolactin-8A4 (239 aa).

The signal sequence occupies residues 1 to 31; sequence MMKLALSQPPFSGTLLMLVVSILLLWEKAAS. 2 cysteine pairs are disulfide-bonded: Cys-35/Cys-42 and Cys-102/Cys-215. Residues Asn-211 and Asn-218 are each glycosylated (N-linked (GlcNAc...) asparagine). Cys-232 and Cys-239 are oxidised to a cystine.

This sequence belongs to the somatotropin/prolactin family. Placental basal zone cells.

Its subcellular location is the secreted. The protein is Prolactin-8A4 (Prl8a4) of Rattus norvegicus (Rat).